The following is a 114-amino-acid chain: Iron-sulfur cluster insertion protein ErpA (114 aa).

3 residues coordinate iron-sulfur cluster: Cys42, Cys106, and Cys108.

It belongs to the HesB/IscA family. In terms of assembly, homodimer. It depends on iron-sulfur cluster as a cofactor.

Its function is as follows. Required for insertion of 4Fe-4S clusters for at least IspG. This is Iron-sulfur cluster insertion protein ErpA from Haemophilus influenzae (strain PittGG).